We begin with the raw amino-acid sequence, 258 residues long: MVALRLIPCLDVANGRVVKGVNFVGLRDAGDPVELAYRYSKSGADELVFLDIAASHEGRATLIEIVRRTAESVTIPFTVGGGISSIEGIKELLRAGADKVSLNSSAVRDPELIAQGANQFGSQCIVVAIDAKRRENCTSEWDVFVNGGRKNTKLDALEWAKKVAGLGAGEILLTSMDGDGTQNGYDLKLTRTIADALQIPVIASGGAGSLEHILEAFTEGKASAALLASLLHDGELTIEQIKDYLLKNQLLIRPVLDM.

Residues aspartate 11 and aspartate 130 contribute to the active site.

The protein belongs to the HisA/HisF family. Heterodimer of HisH and HisF.

The protein resides in the cytoplasm. The enzyme catalyses 5-[(5-phospho-1-deoxy-D-ribulos-1-ylimino)methylamino]-1-(5-phospho-beta-D-ribosyl)imidazole-4-carboxamide + L-glutamine = D-erythro-1-(imidazol-4-yl)glycerol 3-phosphate + 5-amino-1-(5-phospho-beta-D-ribosyl)imidazole-4-carboxamide + L-glutamate + H(+). It participates in amino-acid biosynthesis; L-histidine biosynthesis; L-histidine from 5-phospho-alpha-D-ribose 1-diphosphate: step 5/9. In terms of biological role, IGPS catalyzes the conversion of PRFAR and glutamine to IGP, AICAR and glutamate. The HisF subunit catalyzes the cyclization activity that produces IGP and AICAR from PRFAR using the ammonia provided by the HisH subunit. In Prochlorococcus marinus (strain MIT 9211), this protein is Imidazole glycerol phosphate synthase subunit HisF.